We begin with the raw amino-acid sequence, 418 residues long: Protein fuzzy homolog (418 aa).

Belongs to the fuzzy family. Component of the CPLANE (ciliogenesis and planar polarity effectors) complex, composed of INTU, FUZ and WDPCP. Interacts with CPLANE2. Interacts with CPLANE1.

The protein localises to the cytoplasm. The protein resides in the cytoskeleton. It localises to the cilium basal body. Functionally, probable planar cell polarity effector involved in cilium biogenesis. May regulate protein and membrane transport to the cilium. Proposed to function as core component of the CPLANE (ciliogenesis and planar polarity effectors) complex involved in the recruitment of peripheral IFT-A proteins to basal bodies. May regulate the morphogenesis of hair follicles which depends on functional primary cilia. Binds phosphatidylinositol 3-phosphate with highest affinity, followed by phosphatidylinositol 4-phosphate and phosphatidylinositol 5-phosphate. The protein is Protein fuzzy homolog (FUZ) of Homo sapiens (Human).